We begin with the raw amino-acid sequence, 1228 residues long: DNA-directed RNA polymerase subunit beta (1228 aa).

This sequence belongs to the RNA polymerase beta chain family. As to quaternary structure, the RNAP catalytic core consists of 2 alpha, 1 beta, 1 beta' and 1 omega subunit. When a sigma factor is associated with the core the holoenzyme is formed, which can initiate transcription.

It carries out the reaction RNA(n) + a ribonucleoside 5'-triphosphate = RNA(n+1) + diphosphate. Its function is as follows. DNA-dependent RNA polymerase catalyzes the transcription of DNA into RNA using the four ribonucleoside triphosphates as substrates. In Leptospira biflexa, this protein is DNA-directed RNA polymerase subunit beta.